Here is a 104-residue protein sequence, read N- to C-terminus: Ubiquitin-related modifier 1 homolog (104 aa).

Gly-104 is subject to 1-thioglycine. Gly-104 is covalently cross-linked (Glycyl lysine isopeptide (Gly-Lys) (interchain with K-? in acceptor proteins)).

Belongs to the URM1 family. In terms of assembly, interacts with cer. In terms of processing, C-terminal thiocarboxylation occurs in 2 steps, it is first acyl-adenylated (-COAMP) via the hesA/moeB/thiF part of the MOCS3 homolog, then thiocarboxylated (-COSH) via the rhodanese domain of the MOCS3 homolog.

The protein resides in the cytoplasm. It functions in the pathway tRNA modification; 5-methoxycarbonylmethyl-2-thiouridine-tRNA biosynthesis. Functionally, acts as a sulfur carrier required for 2-thiolation of mcm(5)S(2)U at tRNA wobble positions of cytosolic tRNA(Lys), tRNA(Glu) and tRNA(Gln). Serves as sulfur donor in tRNA 2-thiolation reaction by being thiocarboxylated (-COSH) at its C-terminus by MOCS3. The sulfur is then transferred to tRNA to form 2-thiolation of mcm(5)S(2)U. Also acts as a ubiquitin-like protein (UBL) that is covalently conjugated via an isopeptide bond to lysine residues of target proteins such as Prx2/Jafrac1, Ciao1, Eip71CD and GILT1. The thiocarboxylated form serves as substrate for conjugation and oxidative stress specifically induces the formation of UBL-protein conjugates. The chain is Ubiquitin-related modifier 1 homolog from Drosophila grimshawi (Hawaiian fruit fly).